Here is a 320-residue protein sequence, read N- to C-terminus: MQTRNTFFWIKEQMTRSISVSIIVYVITQTSISNAYPIFAQQGYENPREATGRIVCANCHLANKPLDIEVPQAVLPDTVFEAVVRIPYDMQLKQVLANGKKGALNVGAVLILPEGFELAPPDRISPEMKEKIGNLSFQSYRPTKKNILVIGPVPGQKYSEITFPILSPDPATKKDVHFLKYPIYVGGNRGRGQIYPDGSKSNNTVYNATAAGIISKIIRKEKGGYEITIADASDGHQVVNIIPPGPELLVSEGESIKLDQPLTSNPNVGGFGQGDAEIVLQDPLRVQGLLFFFASVILAQIFLVLKKKQFEKVQLSEMNF.

A signal peptide spans 1–35 (MQTRNTFFWIKEQMTRSISVSIIVYVITQTSISNA). Heme-binding residues include Tyr36, Cys56, Cys59, and His60. The helical transmembrane segment at 286–306 (VQGLLFFFASVILAQIFLVLK) threads the bilayer.

This sequence belongs to the cytochrome f family. The 4 large subunits of the cytochrome b6-f complex are cytochrome b6, subunit IV (17 kDa polypeptide, petD), cytochrome f and the Rieske protein, while the 4 small subunits are PetG, PetL, PetM and PetN. The complex functions as a dimer. It depends on heme as a cofactor.

The protein resides in the plastid. It is found in the chloroplast thylakoid membrane. Functionally, component of the cytochrome b6-f complex, which mediates electron transfer between photosystem II (PSII) and photosystem I (PSI), cyclic electron flow around PSI, and state transitions. The polypeptide is Cytochrome f (Buxus microphylla (Littleleaf boxwood)).